A 31-amino-acid chain; its full sequence is EAVDFDSQCVPTADPGKCKFYFPMWNVNVFT.

A BPTI/Kunitz inhibitor domain is found at 1-31 (EAVDFDSQCVPTADPGKCKFYFPMWNVNVFT).

Functionally, serine protease inhibitor. Inhibits trypsin, elastase, plasmin and kallikrein. The chain is Kunitz-type serine protease inhibitor RsTIQ2 from Rhipicephalus sanguineus (Brown dog tick).